The primary structure comprises 227 residues: RNA-free ribonuclease P (227 aa).

It belongs to the HARP family.

It catalyses the reaction Endonucleolytic cleavage of RNA, removing 5'-extranucleotides from tRNA precursor.. In terms of biological role, RNA-free RNase P that catalyzes the removal of the 5'-leader sequence from pre-tRNA to produce the mature 5'-terminus. This chain is RNA-free ribonuclease P, found in Archaeoglobus fulgidus (strain ATCC 49558 / DSM 4304 / JCM 9628 / NBRC 100126 / VC-16).